A 779-amino-acid chain; its full sequence is Phosphoribosylformylglycinamidine synthase subunit PurL (779 aa).

Histidine 52 is an active-site residue. The ATP site is built by tyrosine 55 and lysine 94. Position 96 (glutamate 96) interacts with Mg(2+). Substrate is bound by residues 97-100 (SHNH) and arginine 119. Histidine 98 serves as the catalytic Proton acceptor. Aspartate 120 provides a ligand contact to Mg(2+). Residue glutamine 243 participates in substrate binding. Mg(2+) is bound at residue aspartate 271. 315–317 (ESQ) is a binding site for substrate. ATP contacts are provided by asparagine 523 and glycine 560. Asparagine 561 is a Mg(2+) binding site. Serine 563 is a binding site for substrate.

Belongs to the FGAMS family. Monomer. Part of the FGAM synthase complex composed of 1 PurL, 1 PurQ and 2 PurS subunits.

The protein localises to the cytoplasm. It catalyses the reaction N(2)-formyl-N(1)-(5-phospho-beta-D-ribosyl)glycinamide + L-glutamine + ATP + H2O = 2-formamido-N(1)-(5-O-phospho-beta-D-ribosyl)acetamidine + L-glutamate + ADP + phosphate + H(+). It functions in the pathway purine metabolism; IMP biosynthesis via de novo pathway; 5-amino-1-(5-phospho-D-ribosyl)imidazole from N(2)-formyl-N(1)-(5-phospho-D-ribosyl)glycinamide: step 1/2. Part of the phosphoribosylformylglycinamidine synthase complex involved in the purines biosynthetic pathway. Catalyzes the ATP-dependent conversion of formylglycinamide ribonucleotide (FGAR) and glutamine to yield formylglycinamidine ribonucleotide (FGAM) and glutamate. The FGAM synthase complex is composed of three subunits. PurQ produces an ammonia molecule by converting glutamine to glutamate. PurL transfers the ammonia molecule to FGAR to form FGAM in an ATP-dependent manner. PurS interacts with PurQ and PurL and is thought to assist in the transfer of the ammonia molecule from PurQ to PurL. The sequence is that of Phosphoribosylformylglycinamidine synthase subunit PurL from Prochlorococcus marinus (strain MIT 9312).